We begin with the raw amino-acid sequence, 408 residues long: Protein ZNF365 (408 aa).

The residue at position 16 (Ser-16) is a Phosphoserine. A C2H2-type; degenerate zinc finger spans residues 26–51 (FRCPRCGDHTRFRSLSSLRAHLEFSH). A phosphoserine mark is found at Ser-139 and Ser-146. A coiled-coil region spans residues 170-298 (VEAVDRTIEK…QLEYYQSQQA (129 aa)). Thr-176 bears the Phosphothreonine mark. Phosphoserine is present on Ser-370.

In terms of assembly, homodimers. Interacts with NDE1 and NDEL1. Interacts with DISC1. Interacts with PARP1. Interacts with MCRS1. In terms of tissue distribution, expressed in cerebral cortex, hippocampus, olfactory tubercle and striatum.

It is found in the cytoplasm. The protein resides in the cytoskeleton. It localises to the microtubule organizing center. The protein localises to the centrosome. Functionally, involved in the positive regulation of oligodendrocyte differentiation during postnatal growth. Involved in the morphogenesis of basket cells in the somatosensory cortex during embryogenesis. Involved in dendritic arborization, morphogenesis of spine density dendrite, and establishment of postsynaptic dendrite density in cortical pyramidal neurons. Involved in the regulation of neurogenesis. Negatively regulates neurite outgrowth. Involved in homologous recombination (HR) repair pathway. Required for proper resolution of DNA double-strand breaks (DSBs) by HR. Is required for recovery of stalled replication forks, and directly contributes to genomic stability. Interacts with PARP1 and mediates MRE11-dependent DNA end resection during replication fork recovery. Contributes to genomic stability by preventing telomere dysfunction. This Rattus norvegicus (Rat) protein is Protein ZNF365 (Znf365).